The following is a 556-amino-acid chain: 2-succinyl-5-enolpyruvyl-6-hydroxy-3-cyclohexene-1-carboxylate synthase (556 aa).

This sequence belongs to the TPP enzyme family. MenD subfamily. In terms of assembly, homodimer. Requires Mg(2+) as cofactor. It depends on Mn(2+) as a cofactor. The cofactor is thiamine diphosphate.

It carries out the reaction isochorismate + 2-oxoglutarate + H(+) = 5-enolpyruvoyl-6-hydroxy-2-succinyl-cyclohex-3-ene-1-carboxylate + CO2. Its pathway is quinol/quinone metabolism; 1,4-dihydroxy-2-naphthoate biosynthesis; 1,4-dihydroxy-2-naphthoate from chorismate: step 2/7. It participates in quinol/quinone metabolism; menaquinone biosynthesis. Catalyzes the thiamine diphosphate-dependent decarboxylation of 2-oxoglutarate and the subsequent addition of the resulting succinic semialdehyde-thiamine pyrophosphate anion to isochorismate to yield 2-succinyl-5-enolpyruvyl-6-hydroxy-3-cyclohexene-1-carboxylate (SEPHCHC). The polypeptide is 2-succinyl-5-enolpyruvyl-6-hydroxy-3-cyclohexene-1-carboxylate synthase (Staphylococcus epidermidis (strain ATCC 12228 / FDA PCI 1200)).